The sequence spans 351 residues: Rhodopsin (351 aa).

Residues 1–36 (MNGTEGPYFYVPMVNTTGVVRSPYEYPQYYLVNPAA) are Extracellular-facing. 2 N-linked (GlcNAc...) asparagine glycosylation sites follow: Asn2 and Asn15. The chain crosses the membrane as a helical span at residues 37–61 (FAVLGAYMFFLIIFGFPINFLTLYV). The Cytoplasmic portion of the chain corresponds to 62-73 (TLEHKKLRTPLN). Residues 74–96 (YILLNLAVADLFMVIGGFTTTMY) traverse the membrane as a helical segment. Over 97 to 110 (SSMHGYFVLGRLGC) the chain is Extracellular. Cys110 and Cys187 are joined by a disulfide. Residues 111–133 (NLEGFSATLGGMISLWSLAVLAI) form a helical membrane-spanning segment. Residues 134–136 (ERW) carry the 'Ionic lock' involved in activated form stabilization motif. Residues 134–152 (ERWVVVCKPTSNFRFGENH) are Cytoplasmic-facing. The helical transmembrane segment at 153 to 173 (AIMGVSLTWTMALACTVPPLV) threads the bilayer. Residues 174-202 (GWSRYIPEGMQCSCGIDYYTRAEGFNNES) are Extracellular-facing. Residue Asn200 is glycosylated (N-linked (GlcNAc...) asparagine). A helical membrane pass occupies residues 203 to 224 (FVLYMFFCHFMVPLIIIFFCYG). Residues 225 to 252 (RLLCAVKEAAAAQQESETTQRAEREVTR) lie on the Cytoplasmic side of the membrane. The helical transmembrane segment at 253–274 (MVILMVIGYLVCWLPYASVAWF) threads the bilayer. The Extracellular segment spans residues 275–286 (IFTHQGSEFGPL). A helical transmembrane segment spans residues 287-308 (FMTIPAFFAKSSSIYNPVIYIC). Lys296 bears the N6-(retinylidene)lysine mark. Residues 309-351 (MNKQFRNCMITTLFCGKNPFEGEEEGASSTKTEASSASSVSPA) lie on the Cytoplasmic side of the membrane. Residue Cys323 is the site of S-palmitoyl cysteine attachment. The disordered stretch occupies residues 330–351 (GEEEGASSTKTEASSASSVSPA). Residues 335-351 (ASSTKTEASSASSVSPA) show a composition bias toward low complexity.

The protein belongs to the G-protein coupled receptor 1 family. Opsin subfamily. Post-translationally, phosphorylated on some or all of the serine and threonine residues present in the C-terminal region. In terms of processing, contains one covalently linked retinal chromophore.

The protein resides in the membrane. It localises to the cell projection. The protein localises to the cilium. It is found in the photoreceptor outer segment. In terms of biological role, photoreceptor required for image-forming vision at low light intensity. While most salt water fish species use retinal as chromophore, most freshwater fish use 3-dehydroretinal, or a mixture of retinal and 3-dehydroretinal. Light-induced isomerization of 11-cis to all-trans retinal triggers a conformational change that activates signaling via G-proteins. Subsequent receptor phosphorylation mediates displacement of the bound G-protein alpha subunit by arrestin and terminates signaling. This is Rhodopsin (rho) from Neoniphon sammara (Spotfin squirrelfish).